The following is a 425-amino-acid chain: Exodeoxyribonuclease 7 large subunit (425 aa).

This sequence belongs to the XseA family. As to quaternary structure, heterooligomer composed of large and small subunits.

It localises to the cytoplasm. The enzyme catalyses Exonucleolytic cleavage in either 5'- to 3'- or 3'- to 5'-direction to yield nucleoside 5'-phosphates.. Its function is as follows. Bidirectionally degrades single-stranded DNA into large acid-insoluble oligonucleotides, which are then degraded further into small acid-soluble oligonucleotides. The protein is Exodeoxyribonuclease 7 large subunit of Nocardia farcinica (strain IFM 10152).